The chain runs to 180 residues: Small ribosomal subunit protein uS5 (180 aa).

One can recognise an S5 DRBM domain in the interval 24 to 87 (MIEKLVAVNR…EQARKNLATV (64 aa)).

Belongs to the universal ribosomal protein uS5 family. In terms of assembly, part of the 30S ribosomal subunit. Contacts proteins S4 and S8.

With S4 and S12 plays an important role in translational accuracy. Functionally, located at the back of the 30S subunit body where it stabilizes the conformation of the head with respect to the body. The sequence is that of Small ribosomal subunit protein uS5 from Xanthomonas axonopodis pv. citri (strain 306).